The following is a 167-amino-acid chain: MERIIEKAIYASRWLMFPVYVGLSFGFILLTLKFFQQIVFIIPDILAMSESGLVLVVLSLIDIALVGGLLVMVMFLGYENFISKMDIQDNEKRLGWMGTMDVNSIKNKVASSIVAISSVHLLRLFMEAEKILDDKIMLCVIIHLTFVLSAFGMAYIDKMSKKKHVLH.

3 helical membrane-spanning segments follow: residues 15 to 35, 53 to 73, and 136 to 156; these read LMFP…LKFF, LVLV…LVMV, and IMLC…MAYI.

Belongs to the UPF0114 family.

The protein localises to the cell membrane. The protein is UPF0114 protein in repA1-repA2 intergenic region of Buchnera aphidicola subsp. Diuraphis noxia.